Consider the following 143-residue polypeptide: NADH-quinone oxidoreductase subunit A (143 aa).

Transmembrane regions (helical) follow at residues F8 to T28, F63 to W83, and L90 to V110.

It belongs to the complex I subunit 3 family. NDH-1 is composed of 14 different subunits. Subunits NuoA, H, J, K, L, M, N constitute the membrane sector of the complex.

It localises to the cell inner membrane. It carries out the reaction a quinone + NADH + 5 H(+)(in) = a quinol + NAD(+) + 4 H(+)(out). Its function is as follows. NDH-1 shuttles electrons from NADH, via FMN and iron-sulfur (Fe-S) centers, to quinones in the respiratory chain. The immediate electron acceptor for the enzyme in this species is believed to be a menaquinone. Couples the redox reaction to proton translocation (for every two electrons transferred, four hydrogen ions are translocated across the cytoplasmic membrane), and thus conserves the redox energy in a proton gradient. This Chlorobium phaeobacteroides (strain DSM 266 / SMG 266 / 2430) protein is NADH-quinone oxidoreductase subunit A.